Here is a 191-residue protein sequence, read N- to C-terminus: Small ribosomal subunit protein eS7y (191 aa).

Met-1 carries the N-acetylmethionine modification. A coiled-coil region spans residues 17-50; that stretch reads TEFEEQVTQALFDLENTNQELKSELKDLYINQAV.

Belongs to the eukaryotic ribosomal protein eS7 family.

In Arabidopsis thaliana (Mouse-ear cress), this protein is Small ribosomal subunit protein eS7y (RPS7B).